Here is a 489-residue protein sequence, read N- to C-terminus: ERO1-like protein alpha (489 aa).

A signal peptide spans 1-20 (METCVLLLGLFLTSVHVTTA). 8 cysteine pairs are disulfide-bonded: C27-C40, C29-C38, C77-C382, C86-C91, C86-C123, C91-C96, C200-C232, and C385-C388. Residues R179, T181, and W192 each coordinate FAD. S243 and H246 together coordinate FAD. N-linked (GlcNAc...) asparagine glycosylation occurs at N271. The FAD site is built by R278 and R291. N-linked (GlcNAc...) asparagine glycosylation is present at N375.

Belongs to the EROs family. As to quaternary structure, predominantly monomer. May function both as a monomer and a homodimer. Requires FAD as cofactor. Post-translationally, the Cys-86/Cys-91 and Cys-385/Cys-388 disulfide bonds constitute the redox-active center. The Cys-86/Cys-91 disulfide bond may accept electron from protein disulfide isomerase (PDI) and funnel them to the active site disulfide Cys-385/Cys-388.

The protein resides in the endoplasmic reticulum membrane. With respect to regulation, enzyme activity is tightly regulated to prevent the accumulation of reactive oxygen species in the endoplasmic reticulum. Reversibly down-regulated by the formation of disulfide bonds between the active site Cys-86 and Cys-123, and between Cys-91 and Cys-96. Glutathione may be required to regulate its activity in the endoplasmic reticulum. Its function is as follows. Oxidoreductase involved in disulfide bond formation in the endoplasmic reticulum. Efficiently reoxidizes P4HB/PDI, the enzyme catalyzing protein disulfide formation, in order to allow P4HB to sustain additional rounds of disulfide formation. Following P4HB reoxidation, passes its electrons to molecular oxygen via FAD, leading to the production of reactive oxygen species (ROS) in the cell. Required for the folding of immunoglobulins. The chain is ERO1-like protein alpha from Danio rerio (Zebrafish).